Here is a 194-residue protein sequence, read N- to C-terminus: Thymidylate kinase (194 aa).

7–14 (GVDGVGKS) contacts ATP.

Belongs to the thymidylate kinase family.

The enzyme catalyses dTMP + ATP = dTDP + ADP. In terms of biological role, phosphorylation of dTMP to form dTDP in both de novo and salvage pathways of dTTP synthesis. The protein is Thymidylate kinase of Campylobacter curvus (strain 525.92).